The following is a 361-amino-acid chain: Chorismate synthase (361 aa).

The NADP(+) site is built by arginine 48 and arginine 54. FMN contacts are provided by residues 125–127 (RSS), 238–239 (NA), glycine 278, 293–297 (KPTSS), and arginine 319.

The protein belongs to the chorismate synthase family. In terms of assembly, homotetramer. Requires FMNH2 as cofactor.

It carries out the reaction 5-O-(1-carboxyvinyl)-3-phosphoshikimate = chorismate + phosphate. The protein operates within metabolic intermediate biosynthesis; chorismate biosynthesis; chorismate from D-erythrose 4-phosphate and phosphoenolpyruvate: step 7/7. Functionally, catalyzes the anti-1,4-elimination of the C-3 phosphate and the C-6 proR hydrogen from 5-enolpyruvylshikimate-3-phosphate (EPSP) to yield chorismate, which is the branch point compound that serves as the starting substrate for the three terminal pathways of aromatic amino acid biosynthesis. This reaction introduces a second double bond into the aromatic ring system. The polypeptide is Chorismate synthase (Salmonella paratyphi A (strain ATCC 9150 / SARB42)).